The primary structure comprises 277 residues: MINKLNIVSGFKEGRSYLKDAFFTRPFRIADIKEDKTDPSLYLMLMSSSPGILDNDHYDINIQIESESRLMLESQSYQRLFNMQNGAVQQMNVSLADKSTFSYVQHPIVPHEQSIFKAYNVFNLTDNCSLTVGEIITCGRKHSGEVFLFSKFQNLTEVFHNGKLVVKDNVLLQPLLADVQTLGQMEGFTHQATLMYINTGIEDVESCIELAYAELQSEENIAFGVSKPFANGMIVRVLGNGGEQLYNAFRKIQRKLWIAEEKLNIKSQVTDLAENYI.

The protein belongs to the UreD family. UreD, UreF and UreG form a complex that acts as a GTP-hydrolysis-dependent molecular chaperone, activating the urease apoprotein by helping to assemble the nickel containing metallocenter of UreC. The UreE protein probably delivers the nickel.

It is found in the cytoplasm. Its function is as follows. Required for maturation of urease via the functional incorporation of the urease nickel metallocenter. The polypeptide is Urease accessory protein UreD (Flavobacterium johnsoniae (strain ATCC 17061 / DSM 2064 / JCM 8514 / BCRC 14874 / CCUG 350202 / NBRC 14942 / NCIMB 11054 / UW101) (Cytophaga johnsonae)).